A 515-amino-acid polypeptide reads, in one-letter code: SWI/SNF global transcription activator complex subunit snf59 (515 aa).

Residues 1–226 (MEEEDITLEH…IHHVDSKNEE (226 aa)) form a disordered region. Composition is skewed to basic and acidic residues over residues 7–37 (TLEHSDDLNKEESGESNRVNIEEPEHHDNSN), 50–59 (EEPKYHDNSN), 73–85 (EPEHHDNSKKEST), 94–103 (EEPKHHDNSN), and 116–125 (EEPKHHDSSN). A compositionally biased stretch (polar residues) spans 126 to 136 (KESTNLDNSNM). Basic and acidic residues predominate over residues 140-226 (ENQKNFKIEE…IHHVDSKNEE (87 aa)).

Belongs to the RSC7/SWP82 family. SWP82 subfamily. Component of the SWI/SNF global transcription activator complex composed of at least arp9, arp42, snf5, snf22, snf30, snf59, sol1, ssr1, ssr2, ssr3, ssr4 and tfg3.

Its subcellular location is the nucleus. Functionally, component of the SWI/SNF complex, an ATP-dependent chromatin remodeling complex, which is required for the positive and negative regulation of gene expression of a large number of genes. It changes chromatin structure by altering DNA-histone contacts within a nucleosome, leading eventually to a change in nucleosome position, thus facilitating or repressing binding of gene-specific transcription factors. In Schizosaccharomyces pombe (strain 972 / ATCC 24843) (Fission yeast), this protein is SWI/SNF global transcription activator complex subunit snf59 (snf59).